Reading from the N-terminus, the 136-residue chain is Ig heavy chain V-A2 region P-MU-3 (136 aa).

The signal sequence occupies residues 1 to 19 (METGLRWLLLVAVLKGVQC). Glutamine 20 bears the Pyrrolidone carboxylic acid mark. Positions 20–127 (QSVKESEGGL…ENEFFNAIWG (108 aa)) constitute an Ig-like domain.

This is Ig heavy chain V-A2 region P-MU-3 from Oryctolagus cuniculus (Rabbit).